A 495-amino-acid chain; its full sequence is Probable leucine aminopeptidase 2 (495 aa).

Residues 1 to 21 (MKSQLLSLAVAVTTISQGVVG) form the signal peptide. Positions 130 to 216 (MAELVVAKNN…SQEDGKNLAT (87 aa)) constitute a PA domain. Asparagine 142 and asparagine 235 each carry an N-linked (GlcNAc...) asparagine glycan. Residues histidine 259 and aspartate 271 each coordinate Zn(2+). N-linked (GlcNAc...) asparagine glycosylation is present at asparagine 272. Residue glutamate 303 is the Proton acceptor of the active site. Residues glutamate 304 and aspartate 332 each contribute to the Zn(2+) site. Residue asparagine 352 is glycosylated (N-linked (GlcNAc...) asparagine). Residue histidine 430 coordinates Zn(2+).

This sequence belongs to the peptidase M28 family. M28A subfamily. As to quaternary structure, monomer. The cofactor is Zn(2+).

It is found in the secreted. Functionally, extracellular aminopeptidase that releases a wide variety of amino acids from natural peptides and contributes to pathogenicity. The sequence is that of Probable leucine aminopeptidase 2 (LAP2) from Arthroderma benhamiae (strain ATCC MYA-4681 / CBS 112371) (Trichophyton mentagrophytes).